The primary structure comprises 473 residues: Uronate isomerase (473 aa).

The protein belongs to the metallo-dependent hydrolases superfamily. Uronate isomerase family.

The enzyme catalyses D-glucuronate = D-fructuronate. It catalyses the reaction aldehydo-D-galacturonate = keto-D-tagaturonate. It functions in the pathway carbohydrate metabolism; pentose and glucuronate interconversion. In Geobacillus stearothermophilus (Bacillus stearothermophilus), this protein is Uronate isomerase (uxaC).